The following is a 265-amino-acid chain: MAEELKIVDNRSREDANLSPVNKIEIYSFFDPFNTDCFKLSAIISKLRIEYNQYIRIRHILNPSLKVLTKCQAQSTSDFDNIALAYKAAELQGRLRAERFIHLMQNEIIPKKDIITEEMICDCIINAGLDYNEFKEDLQKSKLTESLKIDLHIAREMEIEQAPSLVFFSEDVHEEGLKVEGLYPYHIYTYIINELMGTPIEKNLPPKIEHYIQKKQLVTTEELLTIYEWPEKLMTKELKKLALQQKVEKLQYPEGDFWQSKMPRI.

The protein belongs to the SpxH family. Interacts with Spx.

Its subcellular location is the cytoplasm. In terms of biological role, adapter protein required for efficient degradation of Spx by ClpXP under non-stress conditions. Interaction with Spx stabilizes Spx and exposes the C-terminus of Spx for recognition and proteolysis by ClpXP. The protein is ClpXP adapter protein SpxH of Staphylococcus haemolyticus (strain JCSC1435).